Consider the following 481-residue polypeptide: UDP-glucose 6-dehydrogenase 1 (481 aa).

NAD(+) contacts are provided by residues 8–13 (GAGYVG), Asp-33, Arg-38, 86–90 (VNTPT), 127–128 (ST), and Glu-162. Residues 158–162 (EFLAE), 217–224 (KLAANAFL), and 257–270 (RIGA…VGFG) contribute to the substrate site. Residue Cys-273 is the Nucleophile of the active site. Position 273–276 (273–276 (CFQK)) interacts with NAD(+). 335–336 (FK) serves as a coordination point for substrate. Arg-343 serves as a coordination point for NAD(+). Ser-394 is modified (phosphoserine). Arg-448 lines the substrate pocket.

The protein belongs to the UDP-glucose/GDP-mannose dehydrogenase family.

It catalyses the reaction UDP-alpha-D-glucose + 2 NAD(+) + H2O = UDP-alpha-D-glucuronate + 2 NADH + 3 H(+). Its pathway is nucleotide-sugar biosynthesis; UDP-alpha-D-glucuronate biosynthesis; UDP-alpha-D-glucuronate from UDP-alpha-D-glucose: step 1/1. Functionally, involved in the biosynthesis of UDP-glucuronic acid (UDP-GlcA), providing nucleotide sugars for cell-wall polymers. This Oryza sativa subsp. japonica (Rice) protein is UDP-glucose 6-dehydrogenase 1 (UGD1).